A 162-amino-acid chain; its full sequence is 6,7-dimethyl-8-ribityllumazine synthase (162 aa).

5-amino-6-(D-ribitylamino)uracil is bound by residues F23, A61 to E63, and A85 to I87. D90 to T91 provides a ligand contact to (2S)-2-hydroxy-3-oxobutyl phosphate. The active-site Proton donor is the H93. F118 is a binding site for 5-amino-6-(D-ribitylamino)uracil. R132 serves as a coordination point for (2S)-2-hydroxy-3-oxobutyl phosphate.

This sequence belongs to the DMRL synthase family.

The enzyme catalyses (2S)-2-hydroxy-3-oxobutyl phosphate + 5-amino-6-(D-ribitylamino)uracil = 6,7-dimethyl-8-(1-D-ribityl)lumazine + phosphate + 2 H2O + H(+). It functions in the pathway cofactor biosynthesis; riboflavin biosynthesis; riboflavin from 2-hydroxy-3-oxobutyl phosphate and 5-amino-6-(D-ribitylamino)uracil: step 1/2. In terms of biological role, catalyzes the formation of 6,7-dimethyl-8-ribityllumazine by condensation of 5-amino-6-(D-ribitylamino)uracil with 3,4-dihydroxy-2-butanone 4-phosphate. This is the penultimate step in the biosynthesis of riboflavin. The polypeptide is 6,7-dimethyl-8-ribityllumazine synthase (Synechococcus sp. (strain CC9902)).